The sequence spans 721 residues: Dipeptidyl-peptidase 5 (721 aa).

A signal peptide spans 1-18; the sequence is MGAFRWLSIAAAASTALA. 4 N-linked (GlcNAc...) asparagine glycosylation sites follow: N75, N94, N151, and N254. The interval 271 to 297 is disordered; it reads ARPINGPDSPGTPKGIKGDSSSPVFSP. 2 N-linked (GlcNAc...) asparagine glycosylation sites follow: N380 and N450. S560 functions as the Charge relay system in the catalytic mechanism. N607 carries an N-linked (GlcNAc...) asparagine glycan. Residues D643 and H675 each act as charge relay system in the active site.

Belongs to the peptidase S9C family. Post-translationally, N-glycosylated. As to expression, expressed in mycelia and conidia.

It localises to the secreted. May be involved in metabolism of dipeptides or may affect host defense mechanisms. Has a substrate specificity limited to the hydrolysis of X-Ala, His-Ser, and Ser-Tyr dipeptides at a neutral pH optimum. The sequence is that of Dipeptidyl-peptidase 5 from Aspergillus fumigatus (strain CBS 144.89 / FGSC A1163 / CEA10) (Neosartorya fumigata).